The following is a 345-amino-acid chain: uncharacterized protein (345 aa).

It belongs to the proline racemase family.

This is an uncharacterized protein from Bacillus anthracis.